A 142-amino-acid polypeptide reads, in one-letter code: Large ribosomal subunit protein uL13 (142 aa).

It belongs to the universal ribosomal protein uL13 family. Part of the 50S ribosomal subunit.

In terms of biological role, this protein is one of the early assembly proteins of the 50S ribosomal subunit, although it is not seen to bind rRNA by itself. It is important during the early stages of 50S assembly. The sequence is that of Large ribosomal subunit protein uL13 from Alteromonas mediterranea (strain DSM 17117 / CIP 110805 / LMG 28347 / Deep ecotype).